Consider the following 88-residue polypeptide: Synaptonemal complex central element protein 3 (88 aa).

The stretch at 7–75 forms a coiled coil; sequence EERNYDNMLK…FVNCKEEMEK (69 aa).

Homodimer. Can form higher-order homooligomers. Interacts with SYCP1 (via tetrameric core); the interaction remodels SYCP1 homotetramers to 2:1 heterotrimers with SYCE3. SYCP1/SYCE3 heterotrimers form lattice assemblies as part of the mature synaptonemal complex via both lateral and head-to-head interactions. Interacts with the SYCE1-SIX6OS1 complex; the interaction recruits the SYCE1-SIX6OS1 complex to the central element of the synaptonemal complex. Interacts with the SYCE2-TEX12 complex; the interaction promotes fibrous assembly of SYCE2-TEX12 as part of the synaptonemal complex central element. Interacts with SYCE1. Interacts with SYCE2. Interacts with proteasome subunit PSMA8; to participate in meiosis progression during spermatogenesis. Interacts with SPO16.

It localises to the nucleus. The protein localises to the chromosome. Its function is as follows. Major component of the transverse central element of synaptonemal complexes (SCS), formed between homologous chromosomes during meiotic prophase. Required for the assembly of the central element of the synaptonemal complex during meiosis, via remodeling of SYCP1 lattice structures and promoting recruitment of SYCE2-TEX12 and SYCE1-SIX60S1 complexes. Required for chromosome loading of the central element-specific SCS proteins, and for initiating synapsis between homologous chromosomes. Chromosome loading appears to require SYCP1. Required for fertility and normal testis development. The sequence is that of Synaptonemal complex central element protein 3 from Homo sapiens (Human).